The sequence spans 380 residues: Protein-tyrosine sulfotransferase A (380 aa).

Over 1–6 the chain is Cytoplasmic; that stretch reads MRKNRE. A helical; Signal-anchor for type II membrane protein membrane pass occupies residues 7 to 27; sequence LLLVLFLVVFILFYFITARTA. Residues 28–380 are Lumenal-facing; sequence DDPYYSNHRE…PIVDNEVSKL (353 aa). Asparagine 66 is a glycosylation site (N-linked (GlcNAc...) asparagine). 79-83 lines the 3'-phosphoadenylyl sulfate pocket; that stretch reads RSGTT. The cysteines at positions 97 and 157 are disulfide-linked. Glutamate 100 (proton donor/acceptor) is an active-site residue. Residues 102–106 are interaction with peptide substrate; sequence RVIPR. Positions 184, 192, and 196 each coordinate 3'-phosphoadenylyl sulfate. A disulfide bond links cysteine 226 and cysteine 234. Residues tyrosine 239, 284 to 293, and lysine 299 contribute to the 3'-phosphoadenylyl sulfate site; that span reads SSDQVVKPVN.

This sequence belongs to the protein sulfotransferase family.

The protein resides in the golgi apparatus membrane. It carries out the reaction L-tyrosyl-[protein] + 3'-phosphoadenylyl sulfate = O-sulfo-L-tyrosine-[protein] + adenosine 3',5'-bisphosphate + H(+). Catalyzes the O-sulfation of tyrosine residues within acidic motifs of polypeptides, using 3'-phosphoadenylyl sulfate (PAPS) as cosubstrate. In Caenorhabditis elegans, this protein is Protein-tyrosine sulfotransferase A (tpst-1).